A 227-amino-acid polypeptide reads, in one-letter code: Cytidylate kinase (227 aa).

Residue 10 to 18 participates in ATP binding; sequence GPASSGKST.

The protein belongs to the cytidylate kinase family. Type 1 subfamily.

The protein resides in the cytoplasm. It catalyses the reaction CMP + ATP = CDP + ADP. It carries out the reaction dCMP + ATP = dCDP + ADP. The chain is Cytidylate kinase from Streptococcus agalactiae serotype III (strain NEM316).